Consider the following 154-residue polypeptide: SsrA-binding protein (154 aa).

Residues 134–154 are disordered; that stretch reads KRQAIKERQTQREIQRELKER.

Belongs to the SmpB family.

The protein resides in the cytoplasm. Required for rescue of stalled ribosomes mediated by trans-translation. Binds to transfer-messenger RNA (tmRNA), required for stable association of tmRNA with ribosomes. tmRNA and SmpB together mimic tRNA shape, replacing the anticodon stem-loop with SmpB. tmRNA is encoded by the ssrA gene; the 2 termini fold to resemble tRNA(Ala) and it encodes a 'tag peptide', a short internal open reading frame. During trans-translation Ala-aminoacylated tmRNA acts like a tRNA, entering the A-site of stalled ribosomes, displacing the stalled mRNA. The ribosome then switches to translate the ORF on the tmRNA; the nascent peptide is terminated with the 'tag peptide' encoded by the tmRNA and targeted for degradation. The ribosome is freed to recommence translation, which seems to be the essential function of trans-translation. This chain is SsrA-binding protein, found in Synechococcus sp. (strain JA-2-3B'a(2-13)) (Cyanobacteria bacterium Yellowstone B-Prime).